Consider the following 909-residue polypeptide: MKPYTTLPGVAVLVSLLTQSAHAAPFPSRADVVHTREQESAARPQPIVYKHERGVSNEIQYLPPDPQGHPTIIPFPTHISYVTFNSRPGAIHPPYPHLDISEASFKAEDSTCWYRGKPCEGVPHIPIVKGFDSIEKRSPAPQRHPPAPTKATAGYQFTNCTSTSNPGPTATSPTSGIPSQPSAPPATMAGQDIFQPIAKDPIPANIKSRDDHPVKANHIENPTGPISTNKFYANFFLGNQTSTTFTHPYTMIWAKGDKNASSFGMAISHVEPSQRATGEPNNKLPGNPVRYYINPVGIKSLVLSASELKESTTMSVAKPQAFSAQAILRPTGGSSESITFPLVQGMGFITAIYNNLQPAIQSAVLFRKVEPAGSPQGGIFKYKITLEDDKNWLLYVIPENGADPKLKLEGNKLISGPTGFKGVIQVAKNPSAEEGEGIYDKSAGSYATDIKISGSVGTDGTGTYKFSFEKAGKGAPLVMYALPHHVESFDDATKNTKKNMKLSTTTKGMATACVGDSWTMVEGNLPLSMDFAPWKPGSSSQVTLSEGAKNAIKAVAGNELSQDMELQTNLNSMYFSGKGLNKFAGAIYTVQELVGDKAAASGPLNSLKESFKRFVDNKQQIPLVYDNVWKGVVSSGTYEKGDTGLDFGNTLYNDHHFHYGYFILTAAILGKLDPAWLDANKAYVNMLVRDSGNSVDNDEHFPFSRAFDWYHGHSWAKGLFESSDGKDQESTSEDTMYAYAIKMWGKTSGDKSMEARGNLMLGILARTLNNYFLMKNDNVNQPKNFIGNKVTGILFENKIDHTTYFGANLEYIQGIHMLPLLPNSAYTRSAEFVKEEWEAMFASGAAAPAEKVTGGWKGVLYANLAIIDPEASWKYFAQPSLDLSSIDGGASRIWYLAYAAGEYSTYIAL.

The N-terminal stretch at 1 to 23 (MKPYTTLPGVAVLVSLLTQSAHA) is a signal peptide. The tract at residues 136-187 (KRSPAPQRHPPAPTKATAGYQFTNCTSTSNPGPTATSPTSGIPSQPSAPPAT) is disordered. Residues 155-180 (YQFTNCTSTSNPGPTATSPTSGIPSQ) show a composition bias toward polar residues. 3 N-linked (GlcNAc...) asparagine glycosylation sites follow: Asn159, Asn239, and Asn259. Residues 191–430 (QDIFQPIAKD…KGVIQVAKNP (240 aa)) form a beta-sandwich subdomain region. A GH81 domain is found at 191–909 (QDIFQPIAKD…AGEYSTYIAL (719 aa)). Residues 431 to 524 (SAEEGEGIYD…GDSWTMVEGN (94 aa)) form an alpha/beta subdomain region. Residues 539-909 (SSQVTLSEGA…AGEYSTYIAL (371 aa)) are (alpha/beta)6 barrel subdomain. Residue Asp654 is part of the active site. His658, Asp727, Glu729, and Glu733 together coordinate (1,3-beta-D-glucosyl)n. Catalysis depends on residues Glu729 and Glu733. The tract at residues 798 to 800 (KID) is may provide specificity for triple-helical beta-glucan. (1,3-beta-D-glucosyl)n is bound at residue Tyr811.

Belongs to the glycosyl hydrolase 81 family.

The protein resides in the secreted. It is found in the cell wall. The catalysed reaction is Hydrolysis of (1-&gt;3)-beta-D-glucosidic linkages in (1-&gt;3)-beta-D-glucans.. In terms of biological role, cleaves internal linkages in 1,3-beta-glucan. Probably involved in cell separation after cytokinesis. This is Glucan endo-1,3-beta-D-glucosidase ARB_01444 from Arthroderma benhamiae (strain ATCC MYA-4681 / CBS 112371) (Trichophyton mentagrophytes).